The sequence spans 190 residues: CASP-like protein 1E1 (190 aa).

Residues 1–21 (MEHESKTKMDGIEMEKGKKEN) are disordered. At 1–28 (MEHESKTKMDGIEMEKGKKENGSRKGVE) the chain is on the cytoplasmic side. The chain crosses the membrane as a helical span at residues 29–49 (ITMRVLALVLTMVAATVLGVA). Residues 50–83 (KQTEVVPIKLIPTLPPLNVATTAKASYLSAFVYN) are Extracellular-facing. A helical transmembrane segment spans residues 84-104 (ICANAIACGYTAISIMIVIIS). Topologically, residues 105 to 111 (KGRRSKC) are cytoplasmic. A helical transmembrane segment spans residues 112-132 (LLMAVLIGDLMMVALLCSSTG). The Extracellular segment spans residues 133–163 (AAGAIGLMGRHGNKHVMWKKVCGVFGKFCNQ). The helical transmembrane segment at 164-184 (AAVSVAITLIASVVFMLLVVL) threads the bilayer. Topologically, residues 185–190 (DALKLP) are cytoplasmic.

It belongs to the Casparian strip membrane proteins (CASP) family. In terms of assembly, homodimer and heterodimers.

It is found in the cell membrane. The sequence is that of CASP-like protein 1E1 from Arabidopsis lyrata subsp. lyrata (Lyre-leaved rock-cress).